Reading from the N-terminus, the 750-residue chain is Methylmalonyl-CoA mutase, mitochondrial (750 aa).

Residues 1-32 constitute a mitochondrion transit peptide; sequence MLRAKNQLFLLSPHYLRQVKESSGSRLIQQRL. Position 50 (Gln-50) interacts with malonyl-CoA. Residue Lys-89 is modified to N6-acetyllysine. Residues 96 to 99 and 106 to 110 each bind malonyl-CoA; these read YPTM and TIRQY. Lys-212 is modified (N6-acetyllysine). Residues 216–218, Arg-228, Lys-255, His-265, and 304–306 each bind malonyl-CoA; these read TIQ and RLS. Position 335 is an N6-acetyllysine (Lys-335). Position 343 is an N6-succinyllysine (Lys-343). Residue Ser-481 is modified to Phosphoserine. Lys-595 carries the post-translational modification N6-succinyllysine. At Lys-602 the chain carries N6-acetyllysine. One can recognise a B12-binding domain in the interval 614–746; that stretch reads RPRLLVAKMG…DDIEKCLEKK (133 aa). His-627 contributes to the adenosylcob(III)alamin binding site.

Belongs to the methylmalonyl-CoA mutase family. In terms of assembly, homodimer. Interacts (the apoenzyme form) with MMAA; the interaction is GTP dependent. Adenosylcob(III)alamin is required as a cofactor.

It is found in the mitochondrion matrix. Its subcellular location is the mitochondrion. It localises to the cytoplasm. It carries out the reaction (R)-methylmalonyl-CoA = succinyl-CoA. Its activity is regulated as follows. During catalysis, accumulation of oxidized inactive cofactor hydroxocobalamin (OH2Cbl) leads to loss of MMUT activity. Interaction with MMAA decreases the rate of OH2Cbl formation and promotes the replacement of OH2Cbl by the active cofactor adenosylcobalamin (AdoCbl), thereby restoring MMUT activity. Inhibited by itaconyl-CoA, a metabolite that inactivates the coenzyme B12 cofactor. Inhibited at high concentration of substrate. Catalyzes the reversible isomerization of methylmalonyl-CoA (MMCoA) (generated from branched-chain amino acid metabolism and degradation of dietary odd chain fatty acids and cholesterol) to succinyl-CoA (3-carboxypropionyl-CoA), a key intermediate of the tricarboxylic acid cycle. The protein is Methylmalonyl-CoA mutase, mitochondrial of Homo sapiens (Human).